We begin with the raw amino-acid sequence, 405 residues long: Squamosa promoter-binding-like protein 6 (405 aa).

The SBP-type zinc-finger motif lies at 121-198; sequence NPLCQVYGCS…AGHNERRRKP (78 aa). Zn(2+) contacts are provided by Cys-124, Cys-129, Cys-146, His-149, Cys-165, Cys-168, His-172, and Cys-184. The short motif at 181-197 is the Bipartite nuclear localization signal element; the sequence is KRSCRRRLAGHNERRRK.

Zn(2+) is required as a cofactor.

It localises to the nucleus. Trans-acting factor that binds specifically to the consensus nucleotide sequence 5'-TNCGTACAA-3'. This is Squamosa promoter-binding-like protein 6 (SPL6) from Arabidopsis thaliana (Mouse-ear cress).